Reading from the N-terminus, the 300-residue chain is MNIPSIYDDLMCQAISIERIKYWSTRDVVENPRKDEIRSQINTTGNEWIQNGINILDPLYNSVVKIFRKNHGSLTDRLISIVKSSVQLCKFRGVVDSIDSIEFCESVESINCISFQKYLEINKKLRIILVDILFSNAVMTTEGIENLFNEIDKLIKHLSDIKNRYKFQICGCDCDQQISKKRNFSEINYITPSCVEPKIIVQPPNIEFPINIPAKKPRLSQVQTIEQLPLRQSTSRQSISRQSISRQSTSRQSTAPEIIYVVREPDSIYTDFAYNKRQFGLRSYNPQEDSQILSQMVVIR.

A disordered region spans residues 230–251 (LRQSTSRQSISRQSISRQSTSR). Residues 231–251 (RQSTSRQSISRQSISRQSTSR) show a composition bias toward low complexity.

This is an uncharacterized protein from Acanthamoeba polyphaga (Amoeba).